The following is a 362-amino-acid chain: Chorismate synthase (362 aa).

Residue arginine 46 participates in NADP(+) binding. Residues 122–124 (RSS), 238–239 (NA), glycine 278, 293–297 (KPTPS), and arginine 319 each bind FMN.

Belongs to the chorismate synthase family. As to quaternary structure, homotetramer. FMNH2 serves as cofactor.

The catalysed reaction is 5-O-(1-carboxyvinyl)-3-phosphoshikimate = chorismate + phosphate. It functions in the pathway metabolic intermediate biosynthesis; chorismate biosynthesis; chorismate from D-erythrose 4-phosphate and phosphoenolpyruvate: step 7/7. Functionally, catalyzes the anti-1,4-elimination of the C-3 phosphate and the C-6 proR hydrogen from 5-enolpyruvylshikimate-3-phosphate (EPSP) to yield chorismate, which is the branch point compound that serves as the starting substrate for the three terminal pathways of aromatic amino acid biosynthesis. This reaction introduces a second double bond into the aromatic ring system. This is Chorismate synthase from Campylobacter jejuni subsp. doylei (strain ATCC BAA-1458 / RM4099 / 269.97).